The primary structure comprises 287 residues: Putative holocytochrome-c1 synthase (287 aa).

The span at 1-12 (MRGFGSDSSQAS) shows a compositional bias: polar residues. Disordered regions lie at residues 1–63 (MRGF…QPSS) and 81–100 (QSQS…SAPL). 2 stretches are compositionally biased toward low complexity: residues 31 to 63 (QARA…QPSS) and 81 to 92 (QSQSANSTQQAQ).

This sequence belongs to the cytochrome c-type heme lyase family.

The protein resides in the mitochondrion inner membrane. The catalysed reaction is holo-[cytochrome c] = apo-[cytochrome c] + heme b. In terms of biological role, probable lyase that catalyzes the covalent linking of the heme group to the cytochrome C apoprotein to produce the mature functional cytochrome. The protein is Putative holocytochrome-c1 synthase of Chaetomium thermophilum (strain DSM 1495 / CBS 144.50 / IMI 039719) (Thermochaetoides thermophila).